We begin with the raw amino-acid sequence, 295 residues long: Small ribosomal subunit protein uS2 (295 aa).

An N-acetylserine modification is found at Ser-2. At Ser-43 the chain carries Phosphoserine. An N6-acetyllysine modification is found at Lys-52. The interval 54 to 113 is interaction with PPP1R16B; it reads TWEKLLLAARAIVAIENPADVSVISSRNTGQRAVLKFAAATGATPIAGRFTPGTFTNQIQ. Residue Lys-89 is modified to N6-acetyllysine; alternate. Lys-89 participates in a covalent cross-link: Glycyl lysine isopeptide (Lys-Gly) (interchain with G-Cter in SUMO2); alternate. Residue Thr-97 is modified to Phosphothreonine. 2 laminin-binding regions span residues 161 to 180 and 205 to 229; these read IPCNNKGAHSVGLMWWMLAR and RDPEEIEKEEQAAAEKAVTKEEFQG. [DE]-W-[ST] repeat units follow at residues 230 to 232, 247 to 249, 266 to 268, 275 to 277, and 293 to 295; these read EWT, DWS, and EWS. A laminin-binding region spans residues 242–295; that stretch reads QPEVADWSEGVQVPSVPIQQFPTEDWSAQPSTEDWSAAPTAQATEWVGTTTEWS. The tract at residues 266–295 is disordered; that stretch reads DWSAQPSTEDWSAAPTAQATEWVGTTTEWS.

This sequence belongs to the universal ribosomal protein uS2 family. As to quaternary structure, monomer (37LRP) and homodimer (67LR). Component of the small ribosomal subunit. Mature ribosomes consist of a small (40S) and a large (60S) subunit. The 40S subunit contains about 33 different proteins and 1 molecule of RNA (18S). The 60S subunit contains about 49 different proteins and 3 molecules of RNA (28S, 5.8S and 5S). Interacts with RPS21. Interacts with several laminins including at least LAMB1. Interacts with MDK. The mature dimeric form interacts with PPP1R16B (via its fourth ankyrin repeat). Interacts with PPP1CA only in the presence of PPP1R16B. Acylated. Acylation may be a prerequisite for conversion of the monomeric 37 kDa laminin receptor precursor (37LRP) to the mature dimeric 67 kDa laminin receptor (67LR), and may provide a mechanism for membrane association. In terms of processing, cleaved by stromelysin-3 (ST3) at the cell surface. Cleavage by stromelysin-3 may be a mechanism to alter cell-extracellular matrix interactions.

Its subcellular location is the cell membrane. It localises to the cytoplasm. The protein localises to the nucleus. In terms of biological role, required for the assembly and/or stability of the 40S ribosomal subunit. Required for the processing of the 20S rRNA-precursor to mature 18S rRNA in a late step of the maturation of 40S ribosomal subunits. Also functions as a cell surface receptor for laminin. Plays a role in cell adhesion to the basement membrane and in the consequent activation of signaling transduction pathways. May play a role in cell fate determination and tissue morphogenesis. Also acts as a receptor for several other ligands, including the pathogenic prion protein, viruses, and bacteria. Acts as a PPP1R16B-dependent substrate of PPP1CA. The sequence is that of Small ribosomal subunit protein uS2 from Bos taurus (Bovine).